The sequence spans 340 residues: Phenylalanine--tRNA ligase alpha subunit (340 aa).

E255 serves as a coordination point for Mg(2+).

The protein belongs to the class-II aminoacyl-tRNA synthetase family. Phe-tRNA synthetase alpha subunit type 1 subfamily. In terms of assembly, tetramer of two alpha and two beta subunits. The cofactor is Mg(2+).

It localises to the cytoplasm. The enzyme catalyses tRNA(Phe) + L-phenylalanine + ATP = L-phenylalanyl-tRNA(Phe) + AMP + diphosphate + H(+). In Heliobacterium modesticaldum (strain ATCC 51547 / Ice1), this protein is Phenylalanine--tRNA ligase alpha subunit.